A 258-amino-acid chain; its full sequence is Imidazole glycerol phosphate synthase subunit HisF (258 aa).

Active-site residues include aspartate 11 and aspartate 130.

This sequence belongs to the HisA/HisF family. As to quaternary structure, heterodimer of HisH and HisF.

It is found in the cytoplasm. It carries out the reaction 5-[(5-phospho-1-deoxy-D-ribulos-1-ylimino)methylamino]-1-(5-phospho-beta-D-ribosyl)imidazole-4-carboxamide + L-glutamine = D-erythro-1-(imidazol-4-yl)glycerol 3-phosphate + 5-amino-1-(5-phospho-beta-D-ribosyl)imidazole-4-carboxamide + L-glutamate + H(+). Its pathway is amino-acid biosynthesis; L-histidine biosynthesis; L-histidine from 5-phospho-alpha-D-ribose 1-diphosphate: step 5/9. Its function is as follows. IGPS catalyzes the conversion of PRFAR and glutamine to IGP, AICAR and glutamate. The HisF subunit catalyzes the cyclization activity that produces IGP and AICAR from PRFAR using the ammonia provided by the HisH subunit. This is Imidazole glycerol phosphate synthase subunit HisF from Methylorubrum extorquens (strain CM4 / NCIMB 13688) (Methylobacterium extorquens).